Here is a 173-residue protein sequence, read N- to C-terminus: Adenine phosphoribosyltransferase (173 aa).

The protein belongs to the purine/pyrimidine phosphoribosyltransferase family. Homodimer.

Its subcellular location is the cytoplasm. It carries out the reaction AMP + diphosphate = 5-phospho-alpha-D-ribose 1-diphosphate + adenine. Its pathway is purine metabolism; AMP biosynthesis via salvage pathway; AMP from adenine: step 1/1. Catalyzes a salvage reaction resulting in the formation of AMP, that is energically less costly than de novo synthesis. In Thermoanaerobacter pseudethanolicus (strain ATCC 33223 / 39E) (Clostridium thermohydrosulfuricum), this protein is Adenine phosphoribosyltransferase.